The primary structure comprises 596 residues: Polyphenol oxidase B, chloroplastic (596 aa).

Positions 1–23 (MASVVCNSSSSTTTTTLKTPFTS) are disordered. The N-terminal 87 residues, 1–87 (MASVVCNSSS…ANAIPLAASA (87 aa)), are a transit peptide targeting the chloroplast. A compositionally biased stretch (low complexity) spans 8–23 (SSSSTTTTTLKTPFTS). Intrachain disulfides connect cysteine 98–cysteine 114 and cysteine 113–cysteine 182. Cu cation contacts are provided by histidine 181, histidine 199, histidine 208, histidine 329, histidine 333, and histidine 371. The 2'-(S-cysteinyl)-histidine (Cys-His) cross-link spans 185-199 (CNGAYIIGGKELQVH).

This sequence belongs to the tyrosinase family. Requires Cu(2+) as cofactor.

The protein localises to the plastid. The protein resides in the chloroplast thylakoid lumen. The enzyme catalyses 2 catechol + O2 = 2 1,2-benzoquinone + 2 H2O. In terms of biological role, catalyzes the oxidation of mono- and o-diphenols to o-diquinones. This Solanum lycopersicum (Tomato) protein is Polyphenol oxidase B, chloroplastic.